The primary structure comprises 360 residues: Threonine synthase (360 aa).

N6-(pyridoxal phosphate)lysine is present on K69. Pyridoxal 5'-phosphate-binding positions include N95, 196–200 (GNAGN), and T326.

The protein belongs to the threonine synthase family. In terms of assembly, homodimer. The cofactor is pyridoxal 5'-phosphate.

It carries out the reaction O-phospho-L-homoserine + H2O = L-threonine + phosphate. It functions in the pathway amino-acid biosynthesis; L-threonine biosynthesis; L-threonine from L-aspartate: step 5/5. In terms of biological role, catalyzes the gamma-elimination of phosphate from L-phosphohomoserine and the beta-addition of water to produce L-threonine. In Mycobacterium bovis (strain ATCC BAA-935 / AF2122/97), this protein is Threonine synthase (thrC).